Consider the following 421-residue polypeptide: Histidine--tRNA ligase (421 aa).

This sequence belongs to the class-II aminoacyl-tRNA synthetase family. Homodimer.

It localises to the cytoplasm. It carries out the reaction tRNA(His) + L-histidine + ATP = L-histidyl-tRNA(His) + AMP + diphosphate + H(+). The chain is Histidine--tRNA ligase from Nitrosomonas eutropha (strain DSM 101675 / C91 / Nm57).